Here is a 317-residue protein sequence, read N- to C-terminus: Transcription factor EC (317 aa).

Residues 1 to 44 (MTLDHQILNQSFKRSHPPTPSSELLVQHGHPSPESDTGLTGNPL) form a disordered region. The necessary for transcriptional transactivation stretch occupies residues 1 to 90 (MTLDHQILNQ…GLTSASCPSS (90 aa)). The span at 34–43 (ESDTGLTGNP) shows a compositional bias: polar residues. The region spanning 110 to 163 (QKKDNHNLIERRRRYNINYRIKELGTLIPKSNDPDMRWNKGTILKASVEYIKWL) is the bHLH domain. The segment at 241–317 (TSPELCDQAM…SFSSEDGDEL (77 aa)) is necessary for transcriptional transactivation. Residues 297–317 (PAVSKESSRRSSFSSEDGDEL) are disordered.

Belongs to the MiT/TFE family. In terms of assembly, homodimer. Forms heterodimers with MITF and TFE3. Interacts with MITF.

The protein localises to the nucleus. Its function is as follows. Transcriptional regulator that acts as a repressor or an activator. Acts as a transcriptional repressor on minimal promoter containing element F (that includes an E-box sequence). Binds to element F in an E-box sequence-specific manner. Acts as a transcriptional transactivator on the proximal promoter region of the tartrate-resistant acid phosphatase (TRAP) E-box containing promoter. Collaborates with MITF in target gene activation. Acts as a transcriptional repressor on minimal promoter containing mu E3 enhancer sequence. Binds to mu E3 DNA sequence of the immunoglobulin heavy-chain gene enhancer. Binds DNA in a homo- or heterodimeric form. The protein is Transcription factor EC (TFEC) of Bos taurus (Bovine).